The chain runs to 116 residues: Aspartate 1-decarboxylase (116 aa).

Ser25 functions as the Schiff-base intermediate with substrate; via pyruvic acid in the catalytic mechanism. Ser25 carries the pyruvic acid (Ser) modification. Thr57 contributes to the substrate binding site. Tyr58 functions as the Proton donor in the catalytic mechanism. 73–75 provides a ligand contact to substrate; the sequence is GAA.

Belongs to the PanD family. Heterooctamer of four alpha and four beta subunits. Requires pyruvate as cofactor. Post-translationally, is synthesized initially as an inactive proenzyme, which is activated by self-cleavage at a specific serine bond to produce a beta-subunit with a hydroxyl group at its C-terminus and an alpha-subunit with a pyruvoyl group at its N-terminus.

Its subcellular location is the cytoplasm. It catalyses the reaction L-aspartate + H(+) = beta-alanine + CO2. It functions in the pathway cofactor biosynthesis; (R)-pantothenate biosynthesis; beta-alanine from L-aspartate: step 1/1. Its function is as follows. Catalyzes the pyruvoyl-dependent decarboxylation of aspartate to produce beta-alanine. The protein is Aspartate 1-decarboxylase of Phocaeicola vulgatus (strain ATCC 8482 / DSM 1447 / JCM 5826 / CCUG 4940 / NBRC 14291 / NCTC 11154) (Bacteroides vulgatus).